The sequence spans 234 residues: GTP:AMP phosphotransferase, mitochondrial (234 aa).

24 to 29 (GSGKGT) is a GTP binding site. The tract at residues 45–74 (SSGDILRQEIKSESTLGREATTYIAQGKLL) is NMP. AMP contacts are provided by residues Ser-46, Arg-51, 72-74 (KLL), 103-106 (GFPR), and Gln-110. Residues 144–181 (NRYVHVPSGRVYNLQYNPPKVPGLDDITGEPLTKRLDD) are LID. Residues Arg-145 and 154-155 (VY) each bind GTP. The AMP site is built by Arg-178 and Arg-189. Position 218 (Ser-218) interacts with GTP.

The protein belongs to the adenylate kinase family. AK3 subfamily. As to quaternary structure, monomer.

Its subcellular location is the mitochondrion matrix. The enzyme catalyses a ribonucleoside 5'-triphosphate + AMP = a ribonucleoside 5'-diphosphate + ADP. Involved in maintaining the homeostasis of cellular nucleotides by catalyzing the interconversion of nucleoside phosphates. Has GTP:AMP phosphotransferase and ITP:AMP phosphotransferase activities. Does not accept ATP as phosphate donor. This chain is GTP:AMP phosphotransferase, mitochondrial, found in Saccharomyces cerevisiae (Baker's yeast).